We begin with the raw amino-acid sequence, 391 residues long: Polyketide synthase 3 (391 aa).

The active site involves C164.

This sequence belongs to the thiolase-like superfamily. Chalcone/stilbene synthases family. As to quaternary structure, homodimer.

It catalyses the reaction (E)-4-coumaroyl-CoA + 3 malonyl-CoA + 3 H(+) = 2',4,4',6'-tetrahydroxychalcone + 3 CO2 + 4 CoA. The protein operates within secondary metabolite biosynthesis; flavonoid biosynthesis. Functionally, polyketide synthase producing p-coumaryltriacetic acid lactone (CTAL) and slightly naringenin chalcone. Can use p-coumaryl-CoA as substrate. This Rubus idaeus (Raspberry) protein is Polyketide synthase 3 (PKS3).